A 77-amino-acid polypeptide reads, in one-letter code: Envelope protein US9 homolog (77 aa).

A Di-leucine internalization motif motif is present at residues 12–13; the sequence is LL.

Belongs to the alphaherpesvirinae envelope protein US9 family.

This is Envelope protein US9 homolog from Chlorocebus aethiops (Green monkey).